The sequence spans 141 residues: Transmembrane protein 216 (141 aa).

The next 4 membrane-spanning stretches (helical) occupy residues 15 to 35 (VLFFLNGWYYATYFLLELLIF), 49 to 69 (LVLDVVMLLLYLGIEVIRLFF), 82 to 102 (LGISVALTFPSAMMASYYLLL), and 115 to 135 (SILLFFCGSELLLEMLTLATF).

As to quaternary structure, part of the tectonic-like complex (also named B9 complex). Interacts with TMEM107.

It localises to the membrane. Its subcellular location is the cytoplasm. The protein resides in the cytoskeleton. The protein localises to the cilium basal body. Part of the tectonic-like complex which is required for tissue-specific ciliogenesis and may regulate ciliary membrane composition. This Mus musculus (Mouse) protein is Transmembrane protein 216 (Tmem216).